Reading from the N-terminus, the 174-residue chain is Adenine phosphoribosyltransferase (174 aa).

The protein belongs to the purine/pyrimidine phosphoribosyltransferase family. As to quaternary structure, homodimer.

The protein resides in the cytoplasm. The enzyme catalyses AMP + diphosphate = 5-phospho-alpha-D-ribose 1-diphosphate + adenine. It functions in the pathway purine metabolism; AMP biosynthesis via salvage pathway; AMP from adenine: step 1/1. Functionally, catalyzes a salvage reaction resulting in the formation of AMP, that is energically less costly than de novo synthesis. The protein is Adenine phosphoribosyltransferase of Photobacterium profundum (strain SS9).